The sequence spans 357 residues: Histidinol-phosphate aminotransferase 2 (357 aa).

K215 is modified (N6-(pyridoxal phosphate)lysine).

This sequence belongs to the class-II pyridoxal-phosphate-dependent aminotransferase family. Histidinol-phosphate aminotransferase subfamily. As to quaternary structure, homodimer. It depends on pyridoxal 5'-phosphate as a cofactor.

The enzyme catalyses L-histidinol phosphate + 2-oxoglutarate = 3-(imidazol-4-yl)-2-oxopropyl phosphate + L-glutamate. The protein operates within amino-acid biosynthesis; L-histidine biosynthesis; L-histidine from 5-phospho-alpha-D-ribose 1-diphosphate: step 7/9. This Thiobacillus denitrificans (strain ATCC 25259 / T1) protein is Histidinol-phosphate aminotransferase 2.